A 560-amino-acid chain; its full sequence is Protein DETOXIFICATION 45, chloroplastic (560 aa).

The transit peptide at 1-75 directs the protein to the chloroplast; the sequence is MESSRVVVGG…QTNPDCGVVK (75 aa). 12 helical membrane-spanning segments follow: residues 109-129, 147-167, 209-229, 250-270, 280-300, 308-328, 353-373, 389-411, 426-446, 466-486, 495-515, and 523-543; these read LVMLSLPAIAGQAIDPLTLLM, VSMAIFNTISKLFNIPLLSVA, ALVLAIGIGIFEALALSLASG, FLVLRALGAPAYVVSLALQGI, PVYCLGIGNFLAVFLFPLFIY, GAAISSVISQYTVAILMLILL, FVLGRTLSVLVTMTVATSMAA, VWLAVSLLTDALASSGQALIASS, FVLKIGVVTGIALAIVLGMSF, GVLFVAATQPITALAFIFDGL, YAACSMMVVGGISSAFMLYAP, and VWVGLSMFMGLRMVAGFSRLM.

This sequence belongs to the multi antimicrobial extrusion (MATE) (TC 2.A.66.1) family. In terms of tissue distribution, ubiquitous.

It localises to the plastid. The protein localises to the chloroplast membrane. This is Protein DETOXIFICATION 45, chloroplastic from Arabidopsis thaliana (Mouse-ear cress).